The following is a 259-amino-acid chain: tRNA pseudouridine synthase A (259 aa).

The active-site Nucleophile is Asp-51. Tyr-109 contributes to the substrate binding site.

Belongs to the tRNA pseudouridine synthase TruA family. In terms of assembly, homodimer.

It carries out the reaction uridine(38/39/40) in tRNA = pseudouridine(38/39/40) in tRNA. Its function is as follows. Formation of pseudouridine at positions 38, 39 and 40 in the anticodon stem and loop of transfer RNAs. The sequence is that of tRNA pseudouridine synthase A from Colwellia psychrerythraea (strain 34H / ATCC BAA-681) (Vibrio psychroerythus).